Here is a 373-residue protein sequence, read N- to C-terminus: RNA 3'-terminal phosphate cyclase-like protein (373 aa).

It belongs to the RNA 3'-terminal cyclase family. Type 2 subfamily. In terms of assembly, part of the small subunit (SSU) processome, composed of more than 70 proteins and the RNA chaperone small nucleolar RNA (snoRNA) U3. Interacts with BMS1.

Its subcellular location is the nucleus. The protein localises to the nucleolus. As part of the small subunit (SSU) processome, it plays a role in 40S-ribosomal-subunit biogenesis in the early pre-rRNA processing steps at sites A0, A1 and A2 that are required for proper maturation of the 18S RNA. Activates BMS1 by promoting GDP/GTP exchange. Does not have cyclase activity. The chain is RNA 3'-terminal phosphate cyclase-like protein from Homo sapiens (Human).